A 187-amino-acid chain; its full sequence is dCTP deaminase, dUMP-forming (187 aa).

Residues 101–106 (KSSLGR), aspartate 119, 127–129 (TLE), glutamine 148, tyrosine 162, lysine 170, and glutamine 174 each bind dCTP. Glutamate 129 serves as the catalytic Proton donor/acceptor.

The protein belongs to the dCTP deaminase family. Homotrimer.

It catalyses the reaction dCTP + 2 H2O = dUMP + NH4(+) + diphosphate. It participates in pyrimidine metabolism; dUMP biosynthesis; dUMP from dCTP: step 1/1. Bifunctional enzyme that catalyzes both the deamination of dCTP to dUTP and the hydrolysis of dUTP to dUMP without releasing the toxic dUTP intermediate. In Corynebacterium diphtheriae (strain ATCC 700971 / NCTC 13129 / Biotype gravis), this protein is dCTP deaminase, dUMP-forming.